The following is a 377-amino-acid chain: Beta-lactamase (377 aa).

A signal peptide spans 1–19 (MFKTTLCALLITASCSTFA). The active-site Acyl-ester intermediate is the S80. The a beta-lactam site is built by S80, Q136, Y166, N168, A334, and N359.

Belongs to the class-C beta-lactamase family. In terms of assembly, monomer.

It is found in the periplasm. It carries out the reaction a beta-lactam + H2O = a substituted beta-amino acid. Its activity is regulated as follows. Inhibited by the beta-lactamase-blocking agents avibactam, enmetazobactam, relebactam, nacubactam, vaborbactam, taniborbactam, zidebactam, and beta-lactam-analog boronic acids, via a covalent binding to Ser-80. Inhibited by non-beta-lactam, benzo(b)thiophene-2-boronic acid (BZBTH2B) and various cyclic boronates. Not inhibited by clavulanic acid. Inhibited by O-aryloxycarbonyl hydroxamates, via cross-linking of the active site Ser-80 to Lys-331. Weakly inhibited by citric acid. Its function is as follows. Class C beta-lactamase which confers resistance to penicillins and cephalosporins. Has benzylpenicillin- and cephaloridine-hydrolyzing activity. Has weak cefuroxime, cefotaxime, cefoxitin and oxacillin-hydrolyzing activities. This Escherichia coli (strain K12) protein is Beta-lactamase.